Reading from the N-terminus, the 324-residue chain is Aspartate carbamoyltransferase catalytic subunit (324 aa).

Carbamoyl phosphate is bound by residues Arg65 and Thr66. Lys93 contacts L-aspartate. Arg115, His145, and Gln148 together coordinate carbamoyl phosphate. Residues Arg178 and Arg233 each coordinate L-aspartate. The carbamoyl phosphate site is built by Gly274 and Pro275.

It belongs to the aspartate/ornithine carbamoyltransferase superfamily. ATCase family. Heterododecamer (2C3:3R2) of six catalytic PyrB chains organized as two trimers (C3), and six regulatory PyrI chains organized as three dimers (R2).

The catalysed reaction is carbamoyl phosphate + L-aspartate = N-carbamoyl-L-aspartate + phosphate + H(+). It functions in the pathway pyrimidine metabolism; UMP biosynthesis via de novo pathway; (S)-dihydroorotate from bicarbonate: step 2/3. In terms of biological role, catalyzes the condensation of carbamoyl phosphate and aspartate to form carbamoyl aspartate and inorganic phosphate, the committed step in the de novo pyrimidine nucleotide biosynthesis pathway. The protein is Aspartate carbamoyltransferase catalytic subunit of Nitrosococcus oceani (strain ATCC 19707 / BCRC 17464 / JCM 30415 / NCIMB 11848 / C-107).